A 751-amino-acid polypeptide reads, in one-letter code: Catalase-peroxidase (751 aa).

Residues M1–D21 are disordered. The tryptophyl-tyrosyl-methioninium (Trp-Tyr) (with M-270) cross-link spans W90–Y244. H91 functions as the Proton acceptor in the catalytic mechanism. The segment at residues Y244–M270 is a cross-link (tryptophyl-tyrosyl-methioninium (Tyr-Met) (with W-90)). A heme b-binding site is contributed by H285. Residues A365–A390 form a disordered region.

This sequence belongs to the peroxidase family. Peroxidase/catalase subfamily. As to quaternary structure, homodimer or homotetramer. It depends on heme b as a cofactor. Formation of the three residue Trp-Tyr-Met cross-link is important for the catalase, but not the peroxidase activity of the enzyme.

The catalysed reaction is H2O2 + AH2 = A + 2 H2O. It carries out the reaction 2 H2O2 = O2 + 2 H2O. Functionally, bifunctional enzyme with both catalase and broad-spectrum peroxidase activity. The polypeptide is Catalase-peroxidase (Pseudomonas putida (strain GB-1)).